The primary structure comprises 499 residues: Dual specificity protein kinase CLK2 (499 aa).

Positions 1 to 65 (MPHPRRYHSS…RSSYDDHSSD (65 aa)) are disordered. The span at 8–23 (HSSERGSRGSYHEHYQ) shows a compositional bias: basic and acidic residues. Residues 24–33 (SRKHKRRRSR) are compositionally biased toward basic residues. Serine 34 carries the phosphoserine; by PKB/AKT1 modification. Residues 47 to 65 (REDSYHVRSRSSYDDHSSD) show a composition bias toward basic and acidic residues. Serine 98 carries the post-translational modification Phosphoserine; by autocatalysis. Tyrosine 99 is subject to Phosphotyrosine; by autocatalysis. The tract at residues 102–142 (HRENSSYRSQRSSRRKHRRRRRRSRTFSRSSSHSSRRAKSV) is disordered. Residues 112–127 (RSSRRKHRRRRRRSRT) are compositionally biased toward basic residues. Threonine 127 is subject to Phosphothreonine; by PKB/AKT1. Residue serine 141 is modified to Phosphoserine; by autocatalysis. Tyrosine 152 carries the post-translational modification Phosphotyrosine. The Protein kinase domain occupies 163 to 479 (EIVSTLGEGT…GEALQHPFFA (317 aa)). ATP is bound by residues 168 to 176 (LGEGTFGRV) and lysine 192. Aspartate 289 acts as the Proton acceptor in catalysis. Threonine 343 is subject to Phosphothreonine; by PKB/AKT2.

The protein belongs to the protein kinase superfamily. CMGC Ser/Thr protein kinase family. Lammer subfamily. In terms of assembly, interacts with RBMX and UBL5. Interacts with AKT1. In terms of processing, autophosphorylates on all three types of residues. Phosphorylation on Ser-34 and Thr-127 by AKT1 is induced by ionizing radiation or insulin. Phosphorylation plays a critical role in cell proliferation following low dose radiation and prevents cell death following high dose radiation. Phosphorylation at Thr-343 by PKB/AKT2 induces its kinase activity which is required for its stability. The phosphorylation status at Ser-141 influences its subnuclear localization; inhibition of phosphorylation at Ser-141 results in accumulation in the nuclear speckle.

It is found in the nucleus. Its subcellular location is the nucleus speckle. The catalysed reaction is L-seryl-[protein] + ATP = O-phospho-L-seryl-[protein] + ADP + H(+). The enzyme catalyses L-threonyl-[protein] + ATP = O-phospho-L-threonyl-[protein] + ADP + H(+). It carries out the reaction L-tyrosyl-[protein] + ATP = O-phospho-L-tyrosyl-[protein] + ADP + H(+). With respect to regulation, 5,6-dichloro-1-b-D-ribofuranosylbenzimidazole (DRB) inhibits autophosphorylation. TG003 inhibits its kinase activity and affects the regulation of alternative splicing mediated by phosphorylation of SR proteins. In terms of biological role, dual specificity kinase acting on both serine/threonine and tyrosine-containing substrates. Phosphorylates serine- and arginine-rich (SR) proteins of the spliceosomal complex. May be a constituent of a network of regulatory mechanisms that enable SR proteins to control RNA splicing and can cause redistribution of SR proteins from speckles to a diffuse nucleoplasmic distribution. Acts as a suppressor of hepatic gluconeogenesis and glucose output by repressing PPARGC1A transcriptional activity on gluconeogenic genes via its phosphorylation. Phosphorylates PPP2R5B thereby stimulating the assembly of PP2A phosphatase with the PPP2R5B-AKT1 complex leading to dephosphorylation of AKT1. Phosphorylates: PTPN1, SRSF1 and SRSF3. Regulates the alternative splicing of tissue factor (F3) pre-mRNA in endothelial cells. Phosphorylates PAGE4 at several serine and threonine residues and this phosphorylation attenuates the ability of PAGE4 to potentiate the transcriptional activator activity of JUN. In Mus musculus (Mouse), this protein is Dual specificity protein kinase CLK2 (Clk2).